A 100-amino-acid polypeptide reads, in one-letter code: Urease subunit gamma (100 aa).

The protein belongs to the urease gamma subunit family. In terms of assembly, heterotrimer of UreA (gamma), UreB (beta) and UreC (alpha) subunits. Three heterotrimers associate to form the active enzyme.

It is found in the cytoplasm. The catalysed reaction is urea + 2 H2O + H(+) = hydrogencarbonate + 2 NH4(+). Its pathway is nitrogen metabolism; urea degradation; CO(2) and NH(3) from urea (urease route): step 1/1. The sequence is that of Urease subunit gamma from Synechococcus sp. (strain CC9902).